A 320-amino-acid chain; its full sequence is Beta-sarcoglycan (320 aa).

The span at 1–10 shows a compositional bias: low complexity; the sequence is MAAAAAAAAA. Residues 1 to 34 form a disordered region; it reads MAAAAAAAAATEQQSSNGPVKKSMREKAVERRNV. Topologically, residues 1–67 are cytoplasmic; sequence MAAAAAAAAA…GLRGRKGNLA (67 aa). The span at 23 to 34 shows a compositional bias: basic and acidic residues; sequence SMREKAVERRNV. The chain crosses the membrane as a helical; Signal-anchor for type II membrane protein span at residues 68 to 88; it reads ICVIVLLFILAVINLLITLVI. At 89 to 320 the chain is on the extracellular side; that stretch reads WAVIRIGPNG…VADNPCGNTH (232 aa). Residues N160, N213, and N260 are each glycosylated (N-linked (GlcNAc...) asparagine). Cystine bridges form between C290–C316 and C292–C309.

The protein belongs to the sarcoglycan beta/delta/gamma/zeta family. Cross-link to form 2 major subcomplexes: one consisting of SGCB, SGCD and SGCG and the other consisting of SGCB and SGCD. The association between SGCB and SGCG is particularly strong while SGCA is loosely associated with the other sarcoglycans. Post-translationally, disulfide bonds are present.

The protein resides in the cell membrane. The protein localises to the sarcolemma. Its subcellular location is the cytoplasm. It is found in the cytoskeleton. Functionally, component of the sarcoglycan complex, a subcomplex of the dystrophin-glycoprotein complex which forms a link between the F-actin cytoskeleton and the extracellular matrix. The chain is Beta-sarcoglycan (SGCB) from Mesocricetus auratus (Golden hamster).